A 281-amino-acid polypeptide reads, in one-letter code: Elongation factor Ts (281 aa).

The segment at 80–83 (TDFV) is involved in Mg(2+) ion dislocation from EF-Tu.

The protein belongs to the EF-Ts family.

It localises to the cytoplasm. Its function is as follows. Associates with the EF-Tu.GDP complex and induces the exchange of GDP to GTP. It remains bound to the aminoacyl-tRNA.EF-Tu.GTP complex up to the GTP hydrolysis stage on the ribosome. This is Elongation factor Ts from Vibrio atlanticus (strain LGP32) (Vibrio splendidus (strain Mel32)).